We begin with the raw amino-acid sequence, 466 residues long: Ribulose bisphosphate carboxylase large chain (466 aa).

Lys-4 carries the N6,N6,N6-trimethyllysine modification. Residues Asn-113 and Thr-163 each coordinate substrate. Residue Lys-165 is the Proton acceptor of the active site. Lys-167 serves as a coordination point for substrate. Mg(2+) is bound by residues Lys-191, Asp-193, and Glu-194. The residue at position 191 (Lys-191) is an N6-carboxylysine. The Proton acceptor role is filled by His-284. Arg-285, His-317, and Ser-369 together coordinate substrate.

The protein belongs to the RuBisCO large chain family. Type I subfamily. In terms of assembly, heterohexadecamer of 8 large chains and 8 small chains; disulfide-linked. The disulfide link is formed within the large subunit homodimers. The cofactor is Mg(2+). In terms of processing, the disulfide bond which can form in the large chain dimeric partners within the hexadecamer appears to be associated with oxidative stress and protein turnover.

The protein resides in the plastid. It is found in the chloroplast. It carries out the reaction 2 (2R)-3-phosphoglycerate + 2 H(+) = D-ribulose 1,5-bisphosphate + CO2 + H2O. It catalyses the reaction D-ribulose 1,5-bisphosphate + O2 = 2-phosphoglycolate + (2R)-3-phosphoglycerate + 2 H(+). RuBisCO catalyzes two reactions: the carboxylation of D-ribulose 1,5-bisphosphate, the primary event in carbon dioxide fixation, as well as the oxidative fragmentation of the pentose substrate in the photorespiration process. Both reactions occur simultaneously and in competition at the same active site. In Aphelandra sinclairiana (Orange shrimp plant), this protein is Ribulose bisphosphate carboxylase large chain.